The sequence spans 379 residues: UDP-4-amino-4-deoxy-L-arabinose--oxoglutarate aminotransferase (379 aa).

Position 182 is an N6-(pyridoxal phosphate)lysine (K182).

Belongs to the DegT/DnrJ/EryC1 family. ArnB subfamily. Homodimer. The cofactor is pyridoxal 5'-phosphate.

It carries out the reaction UDP-4-amino-4-deoxy-beta-L-arabinose + 2-oxoglutarate = UDP-beta-L-threo-pentopyranos-4-ulose + L-glutamate. It functions in the pathway nucleotide-sugar biosynthesis; UDP-4-deoxy-4-formamido-beta-L-arabinose biosynthesis; UDP-4-deoxy-4-formamido-beta-L-arabinose from UDP-alpha-D-glucuronate: step 2/3. Its pathway is bacterial outer membrane biogenesis; lipopolysaccharide biosynthesis. Catalyzes the conversion of UDP-4-keto-arabinose (UDP-Ara4O) to UDP-4-amino-4-deoxy-L-arabinose (UDP-L-Ara4N). The modified arabinose is attached to lipid A and is required for resistance to polymyxin and cationic antimicrobial peptides. The polypeptide is UDP-4-amino-4-deoxy-L-arabinose--oxoglutarate aminotransferase (Salmonella choleraesuis (strain SC-B67)).